Consider the following 353-residue polypeptide: Inositol 3-kinase (353 aa).

Residues Ser197, 247–250 (GAGD), and Asn274 each bind ATP. Residue Asp250 is the Proton acceptor of the active site.

Belongs to the carbohydrate kinase pfkB family.

It catalyses the reaction myo-inositol + ATP = 1D-myo-inositol 3-phosphate + ADP + H(+). Its function is as follows. Kinase that phosphorylates myo-inositol to produce multiple myo-inositol monophosphates. Participates in phytic acid biosynthesis in developing seeds. Phytic acid is the primary storage form of phosphorus in cereal grains and other plant seeds. The polypeptide is Inositol 3-kinase (Arabidopsis thaliana (Mouse-ear cress)).